The chain runs to 233 residues: Large ribosomal subunit protein uL1 (233 aa).

Belongs to the universal ribosomal protein uL1 family. Part of the 50S ribosomal subunit.

Its function is as follows. Binds directly to 23S rRNA. The L1 stalk is quite mobile in the ribosome, and is involved in E site tRNA release. Functionally, protein L1 is also a translational repressor protein, it controls the translation of the L11 operon by binding to its mRNA. In Psychrobacter sp. (strain PRwf-1), this protein is Large ribosomal subunit protein uL1.